We begin with the raw amino-acid sequence, 1325 residues long: Zinc finger MYM-type protein 6 (1325 aa).

8 MYM-type zinc fingers span residues 113–151 (QLFC…PKDV), 163–206 (KDFC…RFEV), 213–248 (HGLC…SSGP), 296–334 (ELFC…QYHL), 342–443 (YSFC…KPEL), 451–485 (FLFC…KETV), 492–531 (KPFC…LVEN), and 538–572 (EEFC…SESI). Residue serine 397 is modified to Phosphoserine. Positions 665 to 733 (ESTQEDAMKF…NDAELDSPPS (69 aa)) are disordered. Over residues 695 to 706 (PVTQTKATSCKP) the composition is skewed to polar residues.

In terms of tissue distribution, expressed at high levels in heart, skeletal muscle, kidney and liver.

It is found in the nucleus. In terms of biological role, plays a role in the regulation of cell morphology and cytoskeletal organization. The protein is Zinc finger MYM-type protein 6 (ZMYM6) of Homo sapiens (Human).